Here is a 1117-residue protein sequence, read N- to C-terminus: Centrosomal protein of 126 kDa (1117 aa).

The segment at 1–42 is disordered; it reads MLAGRPGTRSAVGELGTESSDNLDRAPLGPRESGGHHRPGSY. The stretch at 49 to 121 forms a coiled coil; that stretch reads LEKNLEEERQ…EEVTEKFQRA (73 aa). Disordered stretches follow at residues 643-664 and 730-759; these read AENSHSLKNKTGTTQQHSQQFH and KKEESKIPVHDDSKTKQGKPQRGRAKIIRK. The span at 730 to 744 shows a compositional bias: basic and acidic residues; sequence KKEESKIPVHDDSKT. Basic residues predominate over residues 745 to 758; that stretch reads KQGKPQRGRAKIIR.

As to quaternary structure, interacts with DCTN1. As to expression, expressed in brain, lung, skeletal muscle, kidney, pancreas, testis and ovary.

The protein resides in the midbody. It is found in the cytoplasm. The protein localises to the cytoskeleton. It localises to the microtubule organizing center. Its subcellular location is the centrosome. The protein resides in the cilium basal body. In terms of biological role, participates in cytokinesis. Necessary for microtubules and mitotic spindle organization. Involved in primary cilium formation. The sequence is that of Centrosomal protein of 126 kDa from Homo sapiens (Human).